The following is a 1420-amino-acid chain: Actin cytoskeleton-regulatory complex protein sla1 (1420 aa).

SH3 domains follow at residues 5-81 (PIIG…EAEP) and 82-139 (STKM…GMDA). Residues 138-344 (DASSAPASQE…RAYDSSSSMG (207 aa)) are disordered. Positions 139–151 (ASSAPASQEPSAS) are enriched in low complexity. Polar residues predominate over residues 152 to 165 (GVNAPTVSAPNSMV). Low complexity predominate over residues 173–185 (PPSAAAPATSLPS). 2 stretches are compositionally biased toward pro residues: residues 187–198 (YNPPPPPPPPPA) and 235–247 (LPAP…PTLP). The span at 250 to 271 (STNTSQLPMPSRNVNNLGSQVN) shows a compositional bias: polar residues. Residues 272–286 (IPPPPATPSQPPRPP) are compositionally biased toward pro residues. The span at 287-301 (TNASTRSTGTSSSMA) shows a compositional bias: polar residues. Phosphoserine occurs at positions 309, 311, and 312. The span at 326–336 (LRTDSHDDSRA) shows a compositional bias: basic and acidic residues. Residue serine 454 is modified to Phosphoserine. Residues 508–568 (AGQKMGTVLY…PSNFIKPDTE (61 aa)) form the SH3 3 domain. 3 disordered regions span residues 560–657 (SNFI…TDRT), 708–786 (YSRT…DKYD), and 902–1016 (EPAP…AQPT). Over residues 572-587 (KSPPSSSKSGQGSSLS) the composition is skewed to low complexity. Residues serine 573 and serine 577 each carry the phosphoserine modification. A compositionally biased stretch (basic residues) spans 589 to 600 (RASKHESKHKRD). Composition is skewed to basic and acidic residues over residues 601 to 636 (SKHE…DSKR) and 709 to 742 (SRTE…EKKK). A Phosphoserine modification is found at serine 927. Residue threonine 929 is modified to Phosphothreonine. Composition is skewed to basic and acidic residues over residues 969-980 (ISEEAKKPEAPS) and 991-1005 (EEQK…DAEK).

This sequence belongs to the SLA1 family. As to quaternary structure, component of the PAN1 actin cytoskeleton-regulatory complex.

Its subcellular location is the cell membrane. The protein localises to the endosome membrane. It is found in the cytoplasm. It localises to the cytoskeleton. The protein resides in the actin patch. Component of the PAN1 actin cytoskeleton-regulatory complex required for the internalization of endosomes during actin-coupled endocytosis. The complex links the site of endocytosis to the cell membrane-associated actin cytoskeleton. Mediates uptake of external molecules and vacuolar degradation of plasma membrane proteins. Plays a role in the proper organization of the cell membrane-associated actin cytoskeleton and promotes its destabilization. The protein is Actin cytoskeleton-regulatory complex protein sla1 (sla1) of Schizosaccharomyces pombe (strain 972 / ATCC 24843) (Fission yeast).